The chain runs to 439 residues: Adenylosuccinate synthetase (439 aa).

GTP-binding positions include 25-31, 53-55, and Lys62; these read GDEGKGK and GHT. The active-site Proton acceptor is the Asp26. Mg(2+) contacts are provided by Asp26 and Gly53. IMP is bound by residues 26 to 29 and 51 to 54; these read DEGK and NAGH. The Proton donor role is filled by His54. The IMP site is built by Thr141, Arg155, Asn232, and Thr247. Residue Thr307 coordinates GTP. Substrate is bound at residue 307–313; it reads TTTNRPR. Position 311 (Arg311) interacts with IMP. GTP-binding positions include Arg313, 339–341, and 425–427; these read KLD and GVG.

The protein belongs to the adenylosuccinate synthetase family. In terms of assembly, homodimer. Mg(2+) is required as a cofactor.

Its subcellular location is the cytoplasm. The enzyme catalyses IMP + L-aspartate + GTP = N(6)-(1,2-dicarboxyethyl)-AMP + GDP + phosphate + 2 H(+). The protein operates within purine metabolism; AMP biosynthesis via de novo pathway; AMP from IMP: step 1/2. Plays an important role in the salvage pathway for purine nucleotide biosynthesis. Catalyzes the first committed step in the biosynthesis of AMP from IMP. The polypeptide is Adenylosuccinate synthetase (Plasmodium yoelii yoelii).